The following is a 595-amino-acid chain: Torsin-1A-interacting protein 1 (595 aa).

The disordered stretch occupies residues 1–221; that stretch reads MAGERWQAEG…GNTKTNEREA (221 aa). The Nuclear segment spans residues 1–351; the sequence is MAGERWQAEG…NEPSVKIKWW (351 aa). Over residues 24-38 the composition is skewed to basic and acidic residues; it reads PIREGRRRLDPRNGD. A Phosphoserine modification is found at serine 60. 2 stretches are compositionally biased toward basic and acidic residues: residues 70–101 and 115–132; these read FEPRAAKERSPGGRRTPPEKFRPASAGEEVRE and RAQEAEEMKTRRSARLEQ. Residues 133–143 are compositionally biased toward polar residues; sequence HSQQPQLSPAT. Phosphoserine occurs at positions 134, 140, 151, 153, 154, and 155. Positions 204–215 are enriched in polar residues; the sequence is LDSTYQTNGNTK. Threonine 235 is subject to Phosphothreonine. Phosphoserine is present on residues serine 241, serine 244, and serine 255. Disordered stretches follow at residues 250–286 and 319–340; these read ARSSDSLESRDEATPAAGNHPDSLRGLPHNQDFPAHE and IQKSNFGNQSPSTSRPQSAIHH. Basic and acidic residues predominate over residues 251-262; sequence RSSDSLESRDEA. Residues 319 to 335 are compositionally biased toward polar residues; sequence IQKSNFGNQSPSTSRPQ. Lysine 321 participates in a covalent cross-link: Glycyl lysine isopeptide (Lys-Gly) (interchain with G-Cter in SUMO2). Serine 328 is subject to Phosphoserine. A helical membrane pass occupies residues 352-372; sequence LLGLVAILAVGLFWFFHTPAV. Positions 368–595 are interaction with TOR1A; sequence HTPAVETTAV…ENTLKAGSCL (228 aa). Residues 373–400 adopt a coiled-coil conformation; the sequence is ETTAVQEFQNQMKQLQSKYQSQNEKLWK. Residues 373–595 lie on the Perinuclear space side of the membrane; sequence ETTAVQEFQN…ENTLKAGSCL (223 aa). The N-linked (GlcNAc...) asparagine glycan is linked to asparagine 411.

Belongs to the TOR1AIP family. Interacts with ATP1B4. Interacts with TOR1A (ATP-bound). Interacts with TOR1B, TOR2A and TOR3A. Interacts with VIM. Expressed in the spinal cord and liver (at protein level).

The protein localises to the nucleus inner membrane. Required for nuclear membrane integrity. Induces TOR1A and TOR1B ATPase activity and is required for their location on the nuclear membrane. Binds to A- and B-type lamins. Possible role in membrane attachment and assembly of the nuclear lamina. The protein is Torsin-1A-interacting protein 1 (Tor1aip1) of Mus musculus (Mouse).